A 421-amino-acid chain; its full sequence is Signal recognition particle receptor FtsY (421 aa).

Residues 1-10 are compositionally biased toward basic residues; the sequence is MFSFFRRKKK. Residues 1-22 are disordered; the sequence is MFSFFRRKKKQETPAPEEAQIQ. GTP is bound by residues 228–235, 309–313, and 373–376; these read GINGAGKT, DTAGR, and TKLD.

This sequence belongs to the GTP-binding SRP family. FtsY subfamily. As to quaternary structure, part of the signal recognition particle protein translocation system, which is composed of SRP and FtsY. SRP is a ribonucleoprotein composed of Ffh and a 4.5S RNA molecule.

Its subcellular location is the cell membrane. It is found in the cytoplasm. It catalyses the reaction GTP + H2O = GDP + phosphate + H(+). Involved in targeting and insertion of nascent membrane proteins into the cytoplasmic membrane. Acts as a receptor for the complex formed by the signal recognition particle (SRP) and the ribosome-nascent chain (RNC). Interaction with SRP-RNC leads to the transfer of the RNC complex to the Sec translocase for insertion into the membrane, the hydrolysis of GTP by both Ffh and FtsY, and the dissociation of the SRP-FtsY complex into the individual components. The chain is Signal recognition particle receptor FtsY from Neisseria meningitidis serogroup C.